Consider the following 337-residue polypeptide: Protein-arginine kinase (337 aa).

The region spanning 12 to 240 is the Phosphagen kinase C-terminal domain; sequence IVIASKVKIL…NKLILREKNQ (229 aa). Residues 15–19, 162–166, and 193–198 contribute to the ATP site; these read ASKVK, RTKVF, and KSIYNS.

The protein belongs to the ATP:guanido phosphotransferase family.

It carries out the reaction L-arginyl-[protein] + ATP = N(omega)-phospho-L-arginyl-[protein] + ADP + H(+). In terms of biological role, catalyzes the specific phosphorylation of arginine residues in proteins. The chain is Protein-arginine kinase from Clostridium perfringens (strain 13 / Type A).